A 667-amino-acid chain; its full sequence is Long-chain fatty acid transport protein 3 (667 aa).

The helical transmembrane segment at Ala3 to Trp23 threads the bilayer. The segment at Thr114–Thr144 is disordered. Low complexity predominate over residues Arg130–Thr144. Residues Thr272–Thr276, His315, Thr412, Asp512, Arg527, and Lys619 each bind ATP.

It belongs to the ATP-dependent AMP-binding enzyme family. Expressed at high levels in adrenal gland, testis and ovary. Expressed at lower levels in adult brain. Found in adrenal cortical cells, spermatocytes and interstitial cells of the testis, theca cells of the ovary, cerebral cortical neurons, and cerebellar Purkinje cells (at protein level).

It localises to the mitochondrion membrane. It carries out the reaction a fatty acid(in) = a fatty acid(out). It catalyses the reaction a long-chain fatty acid + ATP + CoA = a long-chain fatty acyl-CoA + AMP + diphosphate. The catalysed reaction is (5Z,8Z,11Z,14Z)-eicosatetraenoate + ATP + CoA = (5Z,8Z,11Z,14Z)-eicosatetraenoyl-CoA + AMP + diphosphate. The enzyme catalyses hexadecanoate + ATP + CoA = hexadecanoyl-CoA + AMP + diphosphate. It carries out the reaction (9Z)-octadecenoate + ATP + CoA = (9Z)-octadecenoyl-CoA + AMP + diphosphate. It catalyses the reaction (9Z,12Z)-octadecadienoate + ATP + CoA = (9Z,12Z)-octadecadienoyl-CoA + AMP + diphosphate. The catalysed reaction is a very long-chain fatty acid + ATP + CoA = a very long-chain fatty acyl-CoA + AMP + diphosphate. The enzyme catalyses tetracosanoate + ATP + CoA = tetracosanoyl-CoA + AMP + diphosphate. Mainly functions as an acyl-CoA ligase catalyzing the ATP-dependent formation of fatty acyl-CoA using LCFA and very-long-chain fatty acids (VLCFA) as substrates. Can mediate the levels of long-chain fatty acids (LCFA) in the cell by facilitating their transport across membranes. The protein is Long-chain fatty acid transport protein 3 (Slc27a3) of Mus musculus (Mouse).